A 609-amino-acid chain; its full sequence is Zinc metalloproteinase-disintegrin-like VAP2B (609 aa).

An N-terminal signal peptide occupies residues 1–20 (MIQVLLVTICLAAFPYQGSS). The propeptide occupies 21–189 (IILESGNVND…KKASQLVVTA (169 aa)). Residue glutamate 190 is modified to Pyrrolidone carboxylic acid (Glu). The Peptidase M12B domain maps to 198–393 (RFVELFLVVD…HNPECILNEP (196 aa)). Glutamate 201 and aspartate 285 together coordinate Ca(2+). 3 disulfides stabilise this stretch: cysteine 308–cysteine 388, cysteine 348–cysteine 372, and cysteine 350–cysteine 355. Position 333 (histidine 333) interacts with Zn(2+). Glutamate 334 is an active-site residue. Zn(2+) contacts are provided by histidine 337 and histidine 343. The N-linked (GlcNAc...) asparagine glycan is linked to asparagine 371. Residues cysteine 388, asparagine 391, valine 403, asparagine 406, leucine 408, glutamate 410, glutamate 413, and aspartate 416 each contribute to the Ca(2+) site. The Disintegrin domain occupies 401-487 (PPVCGNELLE…ECPADVFHKN (87 aa)). 22 disulfides stabilise this stretch: cysteine 404–cysteine 423, cysteine 404–cysteine 433, cysteine 415–cysteine 428, cysteine 415–cysteine 433, cysteine 417–cysteine 423, cysteine 427–cysteine 450, cysteine 441–cysteine 447, cysteine 446–cysteine 472, cysteine 459–cysteine 479, cysteine 466–cysteine 491, cysteine 466–cysteine 498, cysteine 491–cysteine 503, cysteine 498–cysteine 503, cysteine 510–cysteine 525, cysteine 510–cysteine 560, cysteine 525–cysteine 571, cysteine 538–cysteine 548, cysteine 548–cysteine 555, cysteine 555–cysteine 597, cysteine 560–cysteine 571, cysteine 591–cysteine 602, and cysteine 597–cysteine 602. An inhibits platelet aggregation region spans residues 459–472 (CRASMSECDPAEHC). A D/ECD-tripeptide motif is present at residues 465-467 (ECD). Ca(2+) is bound by residues aspartate 467, proline 468, glutamate 470, aspartate 482, and valine 483.

Belongs to the venom metalloproteinase (M12B) family. P-III subfamily. P-IIIb sub-subfamily. Monomer or heterodimer; non-covalently linked. Interacts with fibrillar collagen. Requires Zn(2+) as cofactor. Post-translationally, the N-terminus is blocked. As to expression, expressed by the venom gland.

The protein localises to the secreted. Zinc metalloprotease that abolishes platelet aggregation induced by collagen, but has no effect on platelet aggregation induced by ADP or thromboxane analog. This inhibition may be due to its ability to bind collagen and block the binding site on collagen for platelets and/or to its ability to bind to the platelet alpha-2/beta-1 collagen receptor (ITGA2/ITGB1) to block its interaction with collagen and hence prevent platelet stimulation. Its function is as follows. Abolishes platelet aggregation induced by collagen (IC(50)=66 nM) but not ADP-stimulated platelet aggregation. This inhibition may be due to its ability to bind collagen and block the binding site on collagen for platelets and/or to its ability to bind to the platelet alpha-2/beta-1 collagen receptor (ITGA2/ITGB1) to block its interaction with collagen and hence prevent platelet stimulation. The chain is Zinc metalloproteinase-disintegrin-like VAP2B from Crotalus atrox (Western diamondback rattlesnake).